The following is a 369-amino-acid chain: Septin-5 (369 aa).

Threonine 13 carries the post-translational modification Phosphothreonine. In terms of domain architecture, Septin-type G spans 41-314; that stretch reads KGFDFTLMVA…ENYRAHCIQQ (274 aa). The segment at 51–58 is G1 motif; that stretch reads GESGLGKS. Residues 51–58, threonine 85, and glycine 111 each bind GTP; that span reads GESGLGKS. A G3 motif region spans residues 108–111; the sequence is DTPG. Arginine 168 carries the post-translational modification Omega-N-methylarginine. The tract at residues 189-192 is G4 motif; the sequence is AKAD. 190-198 contacts GTP; that stretch reads KADCLVPSE. Serine 225 is modified (phosphoserine). Residues glycine 248 and arginine 263 each contribute to the GTP site. Serine 327 is modified (phosphoserine). Residue threonine 336 is modified to Phosphothreonine. The stretch at 338–369 forms a coiled coil; that stretch reads DSETEKLIRMKDEELRRMQEMLQKMKQRMQDQ.

It belongs to the TRAFAC class TrmE-Era-EngA-EngB-Septin-like GTPase superfamily. Septin GTPase family. As to quaternary structure, septins polymerize into heterooligomeric protein complexes that form filaments, and can associate with cellular membranes, actin filaments and microtubules. GTPase activity is required for filament formation. Interacts with SEPTIN2 and SEPTIN5. In platelets, associated with a complex containing STX4. Interacts with PRKN; this interaction leads to SEPTIN5 ubiquitination and degradation. Interacts with DYRK1A. Interacts with STX1A; in the cerebellar cortex. In terms of processing, phosphorylated by DYRK1A. Expressed in brain and testis and at lower level in heart, spleen, lung and kidney.

Its subcellular location is the cytoplasm. It localises to the cytoskeleton. Its function is as follows. Filament-forming cytoskeletal GTPase. May play a role in cytokinesis (Potential). May play a role in platelet secretion. This chain is Septin-5, found in Rattus norvegicus (Rat).